We begin with the raw amino-acid sequence, 300 residues long: MAKPMTITKPVATPLPWRAYLEMTKPRVVALMLLTVLVGMCLAVPGAVPVQPLIAGLVGIGMMAGAAAAYNHLIDRRIDGLMARTYNRPLPKGRISITKALTFATAMAILGFALLYWAVNPLTAWLTFASLIGYAVIYTAYLKRATPQNIVVGGLAGAMPPLLGWTAITGEFHGHALLLVIIIFAWTPPHFWALAIHRRAEYAKVDVPMLPVTHGVEFTKTCIMLYTVLLALACLYPVLVGMCGPLYLVGSTLLSCGFIYKAWQLKYRDKPGLAMQVFRFSIYHLMLLFLLLLVDHYLWS.

8 helical membrane passes run 28-48, 50-70, 106-126, 150-170, 176-196, 222-242, 243-263, and 280-300; these read VVALMLLTVLVGMCLAVPGAV, VQPLIAGLVGIGMMAGAAAAY, AMAILGFALLYWAVNPLTAWL, IVVGGLAGAMPPLLGWTAITG, ALLLVIIIFAWTPPHFWALAI, CIMLYTVLLALACLYPVLVGM, CGPLYLVGSTLLSCGFIYKAW, and FSIYHLMLLFLLLLVDHYLWS.

The protein belongs to the UbiA prenyltransferase family. Protoheme IX farnesyltransferase subfamily.

The protein localises to the cell inner membrane. The enzyme catalyses heme b + (2E,6E)-farnesyl diphosphate + H2O = Fe(II)-heme o + diphosphate. The protein operates within porphyrin-containing compound metabolism; heme O biosynthesis; heme O from protoheme: step 1/1. In terms of biological role, converts heme B (protoheme IX) to heme O by substitution of the vinyl group on carbon 2 of heme B porphyrin ring with a hydroxyethyl farnesyl side group. In Shewanella loihica (strain ATCC BAA-1088 / PV-4), this protein is Protoheme IX farnesyltransferase 1.